Consider the following 142-residue polypeptide: UPF0102 protein PsycPRwf_0497 (142 aa).

The protein belongs to the UPF0102 family.

This chain is UPF0102 protein PsycPRwf_0497, found in Psychrobacter sp. (strain PRwf-1).